A 524-amino-acid polypeptide reads, in one-letter code: Protein hunchback (524 aa).

Disordered regions lie at residues 42–86 (IVKR…PQTQ) and 101–187 (YNHN…DEQS). Positions 59 to 75 (SGSDFHSSSPSSDTSQD) are enriched in low complexity. The segment covering 76–86 (LQHSYQSPQTQ) has biased composition (polar residues). 3 stretches are compositionally biased toward basic and acidic residues: residues 118-127 (KSEKEEKDME), 138-154 (RKPDDNQDHLRRLEMSL), and 164-178 (TSEHSVDELSGKSDN). 4 C2H2-type zinc fingers span residues 202–224 (FKCKQCDFVAITKLEQWNHSKVH), 231–253 (LTCPKCPFITEYKHHLEYHLRNH), 259–281 (FQCNKCDYTCVNKSMLNSHMKSH), and 298–311 (YCHSLKIHLRRYGH). The disordered stretch occupies residues 402-442 (DLSKPGCSYTGEQKSRRKGPAFKVDPTQVESEEEDEETSTT). C2H2-type zinc fingers lie at residues 471–493 (NSCQYCNIAFGDAVLYTIHMGYH) and 499–523 (FTCNMCGVECSDKVSFFLHIARVSH).

This sequence belongs to the hunchback C2H2-type zinc-finger protein family.

It localises to the nucleus. Functionally, gap class segmentation protein that controls development of head structures. This is Protein hunchback (hb) from Tribolium castaneum (Red flour beetle).